A 259-amino-acid polypeptide reads, in one-letter code: MELLAKTRKLNALLQSAAGKPVNFREMSDTMCEVIEANVFVVSRRGKLLGYAIHQQIENERMKQMLAERQFPEEYTQNLFNVTETSSNLDVNSEYTAFPVENKDLFGQGLTTIVPIVGGGERLGTLVLARLGREFLDDDLILAEYSATVVGMEILREKAEEIEEEARSKAVVQMAISSLSYSELEAIEHIFEELNGTEGLLVASKIADRVGITRSVIVNALRKLESAGVIESRSLGMKGTYIKVLNDKFLHELAKLKTN.

Residues 1–155 form a GAF domain region; sequence MELLAKTRKL…SATVVGMEIL (155 aa). A DNA-binding region (H-T-H motif) is located at residues 203–222; it reads ASKIADRVGITRSVIVNALR. Phosphoserine is present on S215.

Belongs to the CodY family.

The protein resides in the cytoplasm. DNA-binding global transcriptional regulator which is involved in the adaptive response to starvation and acts by directly or indirectly controlling the expression of numerous genes in response to nutrient availability. During rapid exponential growth, CodY is highly active and represses genes whose products allow adaptation to nutrient depletion. This Bacillus cytotoxicus (strain DSM 22905 / CIP 110041 / 391-98 / NVH 391-98) protein is Global transcriptional regulator CodY.